Reading from the N-terminus, the 451-residue chain is Proton-coupled amino acid transporter-like protein acs (451 aa).

The Cytoplasmic portion of the chain corresponds to 1 to 48; sequence MNDDIKTVTVYPTTLELTTPTKSANGSNDDYDPHQHRELKNPTTNFQT. Residues 49 to 69 traverse the membrane as a helical segment; sequence FAHFLKASVGTGVLAMPSAFA. Over 70–80 the chain is Extracellular; the sequence is HAGYVNGTLLT. The N-linked (GlcNAc...) asparagine glycan is linked to N75. The chain crosses the membrane as a helical span at residues 81-101; it reads LIIGSLALYCLHILIKCMYIL. The Cytoplasmic portion of the chain corresponds to 102–136; sequence CKRQRVPYVSFSQAMNLGLKQGPPWLRCLAPIAVP. The chain crosses the membrane as a helical span at residues 137–157; sequence FVDGFLAFYHFGICCVYVVFI. Residues 158-167 are Extracellular-facing; sequence AESIKQLVDE. The helical transmembrane segment at 168-188 threads the bilayer; that stretch reads YLVVWDVRIHMCIIIVPLLLI. At 189–199 the chain is on the cytoplasmic side; the sequence is YSIKNLKLLAP. The chain crosses the membrane as a helical span at residues 200–220; it reads FSSAANLLLLVGFGIILYYIF. Topologically, residues 221–237 are extracellular; it reads EELPPLSERDPFVAAGK. A helical membrane pass occupies residues 238 to 258; sequence LPTFFGTVLFALEAVGVILAI. Topologically, residues 259–272 are cytoplasmic; the sequence is EENMATPKSFVGPC. Residues 273-293 form a helical membrane-spanning segment; sequence GILNSGMSIVLGLYVLLGFFG. At 294–320 the chain is on the extracellular side; the sequence is YWKYGNESEGSITLNIPQSEIPAQVVK. An N-linked (GlcNAc...) asparagine glycan is attached at N299. A helical membrane pass occupies residues 321–341; it reads VFFAITTWISYALQGYVTAHI. At 342–357 the chain is on the cytoplasmic side; the sequence is LWDKYLAKRFKETRQT. A helical transmembrane segment spans residues 358–378; sequence FYELIFRAIIVLLTFGCAVAI. Residues 379–382 lie on the Extracellular side of the membrane; the sequence is PDLS. A helical membrane pass occupies residues 383–403; sequence VFLSLVGSFCLSILGLIFPVL. Residues 404–420 lie on the Cytoplasmic side of the membrane; the sequence is LQICVQYTEGYGPFRIK. The chain crosses the membrane as a helical span at residues 421–441; it reads LIINLLLLCFGIFGGVVGTYV. At 442-451 the chain is on the extracellular side; sequence SILDIIAVYK.

The protein belongs to the amino acid/polyamine transporter 2 family. In terms of tissue distribution, expressed in the proximal and distal regions of the midgut; expressed in enterocytes and progenitor cells. Expression increases in response to intestinal bacterial infection and spreads further into the midgut, eventually covering the entire midgut.

Its subcellular location is the cell membrane. It is found in the late endosome membrane. The protein localises to the lysosome membrane. The protein resides in the basal cell membrane. Functionally, amino acid transporter which has pH-dependent electrogenic transport activity for alanine, glycine and proline. Plays a role in positive regulation of growth by directly or indirectly modulating the effects of the TOR signaling pathway. Required in enterocytes for the efficient recovery of gut epithelium following the cytoplasmic purge response to bacterial infection. Acts cell-autonomously to promote the retrograde transport of amino acids into the intestinal epithelium. Acts non-cell-autonomously through the insulin signaling pathway to stimulate Myc expression and the release of amino acids from nutrient stores into the hemolymph. The sequence is that of Proton-coupled amino acid transporter-like protein acs from Drosophila melanogaster (Fruit fly).